Reading from the N-terminus, the 794-residue chain is Hyaluronan mediated motility receptor (794 aa).

The interval 1-87 is disordered; it reads MSFPKAPLKR…SQKNDKDVKR (87 aa). Ser20 is modified (phosphoserine). Over residues 74 to 87 the composition is skewed to basic and acidic residues; the sequence is SKKDSQKNDKDVKR. N-linked (GlcNAc...) asparagine glycans are attached at residues Asn134, Asn279, Asn446, Asn467, Asn488, Asn509, Asn530, Asn561, and Asn601. Residues 365 to 630 form a required for interaction with FAM83D region; sequence EEMTSEKNVF…ITDLKNQLRQ (266 aa). 5 repeat units span residues 442 to 462, 463 to 483, 484 to 504, 505 to 525, and 526 to 546. Residues 442–546 are 5 X 21 AA tandem repeats; it reads QEKYNDTAQS…RDVTAQLESY (105 aa). 2 hyaluronic acid-binding regions span residues 719–729 and 741–750; these read KQKIKHVVKLK and KLRSQLVKRK. Thr784 is modified (phosphothreonine).

As to quaternary structure, interacts with ANKRD26. Interacts with DYNLL1. Interacts with FAM83D/CHICA. Ubiquitously expressed.

It localises to the cell surface. The protein localises to the cytoplasm. Its subcellular location is the cytoskeleton. The protein resides in the spindle. Functionally, receptor for hyaluronic acid (HA). Involved in cell motility. When hyaluronan binds to HMMR, the phosphorylation of a number of proteins, including the PTK2/FAK1 occurs. May also be involved in cellular transformation and metastasis formation, and in regulating extracellular-regulated kinase (ERK) activity. May act as a regulator of adipogenesis. The sequence is that of Hyaluronan mediated motility receptor (Hmmr) from Mus musculus (Mouse).